Consider the following 404-residue polypeptide: Nicotinate phosphoribosyltransferase (404 aa).

Histidine 224 is modified (phosphohistidine; by autocatalysis).

The protein belongs to the NAPRTase family. In terms of processing, transiently phosphorylated on a His residue during the reaction cycle. Phosphorylation strongly increases the affinity for substrates and increases the rate of nicotinate D-ribonucleotide production. Dephosphorylation regenerates the low-affinity form of the enzyme, leading to product release.

The enzyme catalyses nicotinate + 5-phospho-alpha-D-ribose 1-diphosphate + ATP + H2O = nicotinate beta-D-ribonucleotide + ADP + phosphate + diphosphate. It functions in the pathway cofactor biosynthesis; NAD(+) biosynthesis; nicotinate D-ribonucleotide from nicotinate: step 1/1. Catalyzes the synthesis of beta-nicotinate D-ribonucleotide from nicotinate and 5-phospho-D-ribose 1-phosphate at the expense of ATP. In Proteus mirabilis (strain HI4320), this protein is Nicotinate phosphoribosyltransferase.